The sequence spans 51 residues: Large ribosomal subunit protein bL33 (51 aa).

The tract at residues 1-23 (MREKIKLESSAGTGHFYTTTKNK) is disordered. The segment covering 10–20 (SAGTGHFYTTT) has biased composition (polar residues).

Belongs to the bacterial ribosomal protein bL33 family.

This chain is Large ribosomal subunit protein bL33, found in Methylobacillus flagellatus (strain ATCC 51484 / DSM 6875 / VKM B-1610 / KT).